Here is a 101-residue protein sequence, read N- to C-terminus: Urease subunit beta (101 aa).

This sequence belongs to the urease beta subunit family. Heterotrimer of UreA (gamma), UreB (beta) and UreC (alpha) subunits. Three heterotrimers associate to form the active enzyme.

The protein localises to the cytoplasm. The enzyme catalyses urea + 2 H2O + H(+) = hydrogencarbonate + 2 NH4(+). It functions in the pathway nitrogen metabolism; urea degradation; CO(2) and NH(3) from urea (urease route): step 1/1. This chain is Urease subunit beta, found in Pseudomonas syringae pv. syringae (strain B728a).